The primary structure comprises 530 residues: Type 2 DNA topoisomerase 6 subunit B (530 aa).

ATP-binding positions include asparagine 42, aspartate 76, 97–98, 106–113, and lysine 427; these read SK and GMYGLGVK.

The protein belongs to the TOP6B family. As to quaternary structure, homodimer. Heterotetramer of two Top6A and two Top6B chains.

The catalysed reaction is ATP-dependent breakage, passage and rejoining of double-stranded DNA.. In terms of biological role, relaxes both positive and negative superturns and exhibits a strong decatenase activity. The polypeptide is Type 2 DNA topoisomerase 6 subunit B (Saccharolobus islandicus (strain M.16.4 / Kamchatka #3) (Sulfolobus islandicus)).